Consider the following 433-residue polypeptide: Serine/threonine-protein phosphatase 2A activator 2 (433 aa).

Residues 1–10 (MTSQAPPQPA) show a composition bias toward pro residues. Disordered regions lie at residues 1 to 67 (MTSQ…NWTF) and 367 to 400 (SMSEDTGAGDEADVEDDPHAGHDHTGKAHDGTGW). The segment covering 11–23 (SSPGVAAPAAASS) has biased composition (low complexity). Over residues 45 to 59 (NPTPIPETPALPTPP) the composition is skewed to pro residues. The segment covering 367-382 (SMSEDTGAGDEADVED) has biased composition (acidic residues). A compositionally biased stretch (basic and acidic residues) spans 383-396 (DPHAGHDHTGKAHD).

Belongs to the PTPA-type PPIase family.

The protein localises to the cytoplasm. It carries out the reaction [protein]-peptidylproline (omega=180) = [protein]-peptidylproline (omega=0). In terms of biological role, PPIases accelerate the folding of proteins. It catalyzes the cis-trans isomerization of proline imidic peptide bonds in oligopeptides. Acts as a regulatory subunit for PP2A-like phosphatases modulating their activity or substrate specificity, probably by inducing a conformational change in the catalytic subunit, a direct target of the PPIase. Can reactivate inactive phosphatase PP2A-phosphatase methylesterase complexes (PP2Ai) in presence of ATP and Mg(2+) by dissociating the inactive form from the complex. The protein is Serine/threonine-protein phosphatase 2A activator 2 (RRD2) of Gibberella zeae (strain ATCC MYA-4620 / CBS 123657 / FGSC 9075 / NRRL 31084 / PH-1) (Wheat head blight fungus).